The sequence spans 122 residues: Small ribosomal subunit protein uS13 (122 aa).

The interval 95 to 122 is disordered; the sequence is GLPVRGQRTKTNARTRKGPKKTIAGKKK.

It belongs to the universal ribosomal protein uS13 family. In terms of assembly, part of the 30S ribosomal subunit. Forms a loose heterodimer with protein S19. Forms two bridges to the 50S subunit in the 70S ribosome.

Located at the top of the head of the 30S subunit, it contacts several helices of the 16S rRNA. In the 70S ribosome it contacts the 23S rRNA (bridge B1a) and protein L5 of the 50S subunit (bridge B1b), connecting the 2 subunits; these bridges are implicated in subunit movement. Contacts the tRNAs in the A and P-sites. This chain is Small ribosomal subunit protein uS13, found in Corynebacterium glutamicum (strain ATCC 13032 / DSM 20300 / JCM 1318 / BCRC 11384 / CCUG 27702 / LMG 3730 / NBRC 12168 / NCIMB 10025 / NRRL B-2784 / 534).